The following is a 626-amino-acid chain: ATP-dependent RNA helicase dbp-8 (626 aa).

Residues 1–25 (MPSATAAKAKKANANANLKSKVNKA) show a composition bias toward low complexity. A disordered region spans residues 1–183 (MPSATAAKAK…ATPALPVPEP (183 aa)). A compositionally biased stretch (acidic residues) spans 40 to 98 (DESDFGSELDVEDESAASDEEDEDEDEDEHDLEEGVSDEGEGVSDEEEGVSDEDEDEEN). Over residues 161–173 (KQAEAPKTEKTEE) the composition is skewed to basic and acidic residues. The Q motif motif lies at 195–223 (TTFDALNVRPWLVQSLANMAIKRPTGIQK). In terms of domain architecture, Helicase ATP-binding spans 226 to 406 (IPEILKGRDC…ERPPIPGRAP (181 aa)). 239–246 (SRTGSGKT) provides a ligand contact to ATP. The short motif at 348-351 (DEAD) is the DEAD box element. The region spanning 438–589 (YLHMFLLTPQ…GVNLETRVIR (152 aa)) is the Helicase C-terminal domain.

The protein belongs to the DEAD box helicase family. DDX49/DBP8 subfamily.

The protein localises to the nucleus. It is found in the nucleolus. It catalyses the reaction ATP + H2O = ADP + phosphate + H(+). ATP-binding RNA helicase involved in 40S ribosomal subunit biogenesis and is required for the normal formation of 18S rRNAs through pre-rRNA processing at A0, A1 and A2 sites. Required for vegetative growth. This chain is ATP-dependent RNA helicase dbp-8 (dbp-8), found in Neurospora crassa (strain ATCC 24698 / 74-OR23-1A / CBS 708.71 / DSM 1257 / FGSC 987).